The chain runs to 308 residues: Mannan endo-1,4-beta-mannosidase (308 aa).

The active-site Proton donor is Glu125. The active-site Nucleophile is Glu220. Residues 284–308 (DGLQETSKPSTVFTDDNGGHPEPPT) are disordered. The segment covering 287 to 297 (QETSKPSTVFT) has biased composition (polar residues).

The protein belongs to the glycosyl hydrolase 5 (cellulase A) family.

It carries out the reaction Random hydrolysis of (1-&gt;4)-beta-D-mannosidic linkages in mannans, galactomannans and glucomannans.. Its function is as follows. Catalyzes the endo hydrolysis of beta-1,4-linked mannan, galactomannan and glucomannan. It is able to hydrolyze mannosidic linkages that are flanked by mannose or glucose. This Salipaludibacillus agaradhaerens (Bacillus agaradhaerens) protein is Mannan endo-1,4-beta-mannosidase.